We begin with the raw amino-acid sequence, 572 residues long: Secreted triacylglycerol lipase LIP6 (572 aa).

The N-terminal stretch at 1-23 (MYSTSLLRWLVVALVSAVPLVTA) is a signal peptide. A disulfide bridge connects residues Cys117 and Cys291. The Nucleophile role is filled by Ser202. Asp351 is a catalytic residue. An N-linked (GlcNAc...) asparagine glycan is attached at Asn360. His385 is an active-site residue. Residues 468-572 (KGGVWNDVLK…SSRRHVARFM (105 aa)) form a disordered region. The segment covering 491-511 (PESKKATKKYKSESKAEKKQP) has biased composition (basic and acidic residues). The span at 512–525 (DSIPSSSSKSSSDN) shows a compositional bias: low complexity. Asn525 carries N-linked (GlcNAc...) asparagine glycosylation. Basic residues predominate over residues 528–540 (AHAKYHAHGHGHG). Residues 541–562 (HASSNSNNGHSHSAKESSTSKG) show a composition bias toward low complexity. A compositionally biased stretch (basic residues) spans 563-572 (SSRRHVARFM).

Belongs to the AB hydrolase superfamily. Lipase family. Class Lip subfamily.

It localises to the secreted. Its subcellular location is the cell wall. The enzyme catalyses a triacylglycerol + H2O = a diacylglycerol + a fatty acid + H(+). It catalyses the reaction a monoacylglycerol + H2O = glycerol + a fatty acid + H(+). The catalysed reaction is a diacylglycerol + H2O = a monoacylglycerol + a fatty acid + H(+). In terms of biological role, secreted lipase involved in Dandruff and seborrheic dermatitis (D/SD) probably via lipase-mediated breakdown of sebaceous lipids and release of irritating free fatty acids. Shows only minimal activity against triolein. Mostly converts monoolein to di- and triolein, while free fatty acids are only produced in low amounts. The polypeptide is Secreted triacylglycerol lipase LIP6 (Malassezia globosa (strain ATCC MYA-4612 / CBS 7966) (Dandruff-associated fungus)).